A 476-amino-acid chain; its full sequence is Calcium/calmodulin-dependent protein kinase type 1G (476 aa).

Residues 23–277 enclose the Protein kinase domain; the sequence is FIFMEVLGSG…CEKALRHPWI (255 aa). ATP contacts are provided by residues 29–37 and Lys-52; that span reads LGSGAFSEV. The Proton acceptor role is filled by Asp-143. Residues 277–317 form an autoinhibitory domain region; that stretch reads IDGNTALHRDIYPSVSLQIQKNFAKSKWRQAFNAAAVVHHM. Residues 297–318 form a calmodulin-binding region; sequence KNFAKSKWRQAFNAAAVVHHMR. Residues 326-387 are disordered; that stretch reads SPSVRQEVEN…SSRPSAPGGR (62 aa).

This sequence belongs to the protein kinase superfamily. CAMK Ser/Thr protein kinase family. CaMK subfamily. In terms of processing, prenylated on Cys-473.

The protein localises to the cytoplasm. Its subcellular location is the golgi apparatus membrane. The protein resides in the cell membrane. The enzyme catalyses L-seryl-[protein] + ATP = O-phospho-L-seryl-[protein] + ADP + H(+). The catalysed reaction is L-threonyl-[protein] + ATP = O-phospho-L-threonyl-[protein] + ADP + H(+). Its activity is regulated as follows. Activated by Ca(2+)/calmodulin. Binding of calmodulin is thought to result in a conformational change and leads to activation through phosphorylation by CAMKK1. Functionally, calcium/calmodulin-dependent protein kinase belonging to a proposed calcium-triggered signaling cascade. In vitro phosphorylates transcription factor CREB1. The protein is Calcium/calmodulin-dependent protein kinase type 1G (Camk1g) of Rattus norvegicus (Rat).